A 143-amino-acid polypeptide reads, in one-letter code: Small ribosomal subunit protein uS9 (143 aa).

A disordered region spans residues 118–143 (DSRRTEPHKPNRSTKGPRAKRQKSYR). The span at 127 to 143 (PNRSTKGPRAKRQKSYR) shows a compositional bias: basic residues.

The protein belongs to the universal ribosomal protein uS9 family.

In Thermococcus sibiricus (strain DSM 12597 / MM 739), this protein is Small ribosomal subunit protein uS9.